The following is a 523-amino-acid chain: Sucrose 6(F)-phosphate phosphorylase (523 aa).

Sucrose 6(F)-phosphate-binding positions include Asp-58, His-96, 221–223 (RLD), Glu-264, 326–327 (HD), and Lys-434. Asp-223 functions as the Nucleophile in the catalytic mechanism. The Proton donor/acceptor role is filled by Glu-264.

This sequence belongs to the glycosyl hydrolase 13 family. Sucrose phosphorylase subfamily. Monomer.

It catalyses the reaction sucrose 6(F)-phosphate + phosphate = beta-D-fructose 6-phosphate + alpha-D-glucose 1-phosphate. Functionally, catalyzes the reversible phosphorolysis of sucrose 6(F)-phosphate into alpha-D-glucose 1-phosphate (Glc1P) and D-fructose 6-phosphate. May be involved in a new pathway for the degradation of sucrose, which could become phosphorylated on its fructose moiety during uptake via a PTS system. Shows strict specificity since it does not catalyze reactions with alternative substrates. This chain is Sucrose 6(F)-phosphate phosphorylase, found in Ilumatobacter coccineus (strain NBRC 103263 / KCTC 29153 / YM16-304).